A 378-amino-acid chain; its full sequence is Erythronate-4-phosphate dehydrogenase (378 aa).

Residues Ser-45 and Thr-66 each contribute to the substrate site. Residues Asp-146 and Thr-175 each coordinate NAD(+). Arg-208 is an active-site residue. Asp-232 contacts NAD(+). Glu-237 is an active-site residue. His-254 functions as the Proton donor in the catalytic mechanism. Gly-257 is a binding site for NAD(+). Position 258 (Tyr-258) interacts with substrate.

Belongs to the D-isomer specific 2-hydroxyacid dehydrogenase family. PdxB subfamily. In terms of assembly, homodimer.

The protein localises to the cytoplasm. It catalyses the reaction 4-phospho-D-erythronate + NAD(+) = (R)-3-hydroxy-2-oxo-4-phosphooxybutanoate + NADH + H(+). It functions in the pathway cofactor biosynthesis; pyridoxine 5'-phosphate biosynthesis; pyridoxine 5'-phosphate from D-erythrose 4-phosphate: step 2/5. In terms of biological role, catalyzes the oxidation of erythronate-4-phosphate to 3-hydroxy-2-oxo-4-phosphonooxybutanoate. This Pectobacterium carotovorum subsp. carotovorum (strain PC1) protein is Erythronate-4-phosphate dehydrogenase.